The following is a 1687-amino-acid chain: Protein TOPAZ1 (1687 aa).

4 disordered regions span residues 1–131, 319–339, 596–632, and 880–916; these read MRRP…QPGF, EESSVGRKPRKRMKLSEKADE, LSRSGSEVISNTTEDTQLTSDTQSLTGNKKRDRGNLT, and TSEVPRISQEPNVPGEHQSTDSKYVETPVKKEPSDDL. Residues 31–41 show a composition bias toward gly residues; that stretch reads GAAGGCGPEAG. Residues 80-113 show a composition bias toward basic and acidic residues; the sequence is RRVEGRRGQVSPSDRRGLEAAKEAEFPLQTERHT. Positions 598 to 622 are enriched in polar residues; the sequence is RSGSEVISNTTEDTQLTSDTQSLTG. The span at 897–916 shows a compositional bias: basic and acidic residues; sequence QSTDSKYVETPVKKEPSDDL.

Its subcellular location is the cytoplasm. The protein resides in the cytosol. In terms of biological role, important for normal spermatogenesis and male fertility. Specifically required for progression to the post-meiotic stages of spermatocyte development. Seems to be necessary for normal expression levels of a number of testis-expressed gene transcripts, although its role in this process is unclear. In Macaca fascicularis (Crab-eating macaque), this protein is Protein TOPAZ1 (TOPAZ1).